Reading from the N-terminus, the 274-residue chain is Methylamine utilization protein MauF (274 aa).

Helical transmembrane passes span 30-50, 52-72, 105-125, 127-147, 176-196, 202-222, and 253-273; these read WTRA…ALAM, AAHV…LSTW, LGYA…GGIA, LSGF…LAYG, WVVG…YVQT, VTAA…IAIF, and AAIA…MLAL.

It localises to the cell membrane. The protein operates within one-carbon metabolism; methylamine degradation. This Paracoccus versutus (Thiobacillus versutus) protein is Methylamine utilization protein MauF (mauF).